The sequence spans 338 residues: Holliday junction branch migration complex subunit RuvB (338 aa).

The large ATPase domain (RuvB-L) stretch occupies residues 1-179; it reads MTDLTTPIRT…FGIPVRLNFY (179 aa). ATP contacts are provided by Leu18, Arg19, Gly60, Lys63, Thr64, Thr65, Arg169, Tyr179, and Arg216. Position 64 (Thr64) interacts with Mg(2+). The tract at residues 180-250 is small ATPAse domain (RuvB-S); that stretch reads THAELEQVIG…AADAALNRLE (71 aa). The interval 253 to 338 is head domain (RuvB-H); the sequence is ALGLDAMDRR…AGSQDGLFDK (86 aa). DNA is bound by residues Arg289, Arg308, and Arg313.

This sequence belongs to the RuvB family. Homohexamer. Forms an RuvA(8)-RuvB(12)-Holliday junction (HJ) complex. HJ DNA is sandwiched between 2 RuvA tetramers; dsDNA enters through RuvA and exits via RuvB. An RuvB hexamer assembles on each DNA strand where it exits the tetramer. Each RuvB hexamer is contacted by two RuvA subunits (via domain III) on 2 adjacent RuvB subunits; this complex drives branch migration. In the full resolvosome a probable DNA-RuvA(4)-RuvB(12)-RuvC(2) complex forms which resolves the HJ.

The protein resides in the cytoplasm. It catalyses the reaction ATP + H2O = ADP + phosphate + H(+). Its function is as follows. The RuvA-RuvB-RuvC complex processes Holliday junction (HJ) DNA during genetic recombination and DNA repair, while the RuvA-RuvB complex plays an important role in the rescue of blocked DNA replication forks via replication fork reversal (RFR). RuvA specifically binds to HJ cruciform DNA, conferring on it an open structure. The RuvB hexamer acts as an ATP-dependent pump, pulling dsDNA into and through the RuvAB complex. RuvB forms 2 homohexamers on either side of HJ DNA bound by 1 or 2 RuvA tetramers; 4 subunits per hexamer contact DNA at a time. Coordinated motions by a converter formed by DNA-disengaged RuvB subunits stimulates ATP hydrolysis and nucleotide exchange. Immobilization of the converter enables RuvB to convert the ATP-contained energy into a lever motion, pulling 2 nucleotides of DNA out of the RuvA tetramer per ATP hydrolyzed, thus driving DNA branch migration. The RuvB motors rotate together with the DNA substrate, which together with the progressing nucleotide cycle form the mechanistic basis for DNA recombination by continuous HJ branch migration. Branch migration allows RuvC to scan DNA until it finds its consensus sequence, where it cleaves and resolves cruciform DNA. The chain is Holliday junction branch migration complex subunit RuvB from Sphingopyxis alaskensis (strain DSM 13593 / LMG 18877 / RB2256) (Sphingomonas alaskensis).